Here is a 426-residue protein sequence, read N- to C-terminus: 3-phosphoshikimate 1-carboxyvinyltransferase (426 aa).

3-phosphoshikimate-binding residues include lysine 21, serine 22, and arginine 26. Lysine 21 is a phosphoenolpyruvate binding site. Glycine 92 and arginine 122 together coordinate phosphoenolpyruvate. Residues serine 167, serine 168, glutamine 169, serine 195, aspartate 315, and lysine 342 each coordinate 3-phosphoshikimate. Glutamine 169 provides a ligand contact to phosphoenolpyruvate. Aspartate 315 serves as the catalytic Proton acceptor. Residues arginine 346 and arginine 386 each coordinate phosphoenolpyruvate.

This sequence belongs to the EPSP synthase family. In terms of assembly, monomer.

It localises to the cytoplasm. It carries out the reaction 3-phosphoshikimate + phosphoenolpyruvate = 5-O-(1-carboxyvinyl)-3-phosphoshikimate + phosphate. It functions in the pathway metabolic intermediate biosynthesis; chorismate biosynthesis. Its function is as follows. Catalyzes the transfer of the enolpyruvyl moiety of phosphoenolpyruvate (PEP) to the 5-hydroxyl of shikimate-3-phosphate (S3P) to produce enolpyruvyl shikimate-3-phosphate and inorganic phosphate. This chain is 3-phosphoshikimate 1-carboxyvinyltransferase, found in Methanosphaera stadtmanae (strain ATCC 43021 / DSM 3091 / JCM 11832 / MCB-3).